Consider the following 326-residue polypeptide: Virulence factor CaO19.6688 (326 aa).

Disordered regions lie at residues 19-91, 112-137, 161-184, 222-245, and 276-326; these read FNSL…KLPS, EEDNQEQQLQDGEPLSAPTTNNGTTK, NTTITSSRSNPTNSTPTSNDPSFP, NVGQTPNNNNNNNHGVSETENDLL, and YEYG…PKIK. Low complexity-rich tracts occupy residues 21 to 42, 53 to 78, and 117 to 137; these read SLKSSPSSTSSLSSISTSSSSS, NRNTSNSQNSSISTAPTTATAANTTP, and EQQLQDGEPLSAPTTNNGTTK.

Functionally, virulence factor involved in pathogen-host interaction. Modulates host pro-inflammatory cytokine interleukin-1 beta (IL1B) expression. The chain is Virulence factor CaO19.6688 from Candida albicans (strain SC5314 / ATCC MYA-2876) (Yeast).